The chain runs to 277 residues: 2-dehydro-3-deoxyphosphooctonate aldolase (277 aa).

This sequence belongs to the KdsA family.

The protein resides in the cytoplasm. The catalysed reaction is D-arabinose 5-phosphate + phosphoenolpyruvate + H2O = 3-deoxy-alpha-D-manno-2-octulosonate-8-phosphate + phosphate. Its pathway is carbohydrate biosynthesis; 3-deoxy-D-manno-octulosonate biosynthesis; 3-deoxy-D-manno-octulosonate from D-ribulose 5-phosphate: step 2/3. It participates in bacterial outer membrane biogenesis; lipopolysaccharide biosynthesis. This chain is 2-dehydro-3-deoxyphosphooctonate aldolase, found in Brucella abortus (strain S19).